We begin with the raw amino-acid sequence, 332 residues long: Tryptophan--tRNA ligase (332 aa).

Residues 13-15 (KPS) and 21-22 (GN) contribute to the ATP site. The 'HIGH' region motif lies at 14–22 (PSGDLTLGN). Asp137 is an L-tryptophan binding site. ATP contacts are provided by residues 149-151 (GKD), Ile188, and 197-201 (KMSKS). The 'KMSKS' region signature appears at 197–201 (KMSKS).

It belongs to the class-I aminoacyl-tRNA synthetase family. In terms of assembly, homodimer.

Its subcellular location is the cytoplasm. It carries out the reaction tRNA(Trp) + L-tryptophan + ATP = L-tryptophyl-tRNA(Trp) + AMP + diphosphate + H(+). Functionally, catalyzes the attachment of tryptophan to tRNA(Trp). The protein is Tryptophan--tRNA ligase of Clostridium perfringens (strain 13 / Type A).